A 62-amino-acid chain; its full sequence is Fungus-induced protein 1 (62 aa).

The signal sequence occupies residues 1 to 22 (MSQNLFQILLIFAILAALQVQG).

This is Fungus-induced protein 1 from Caenorhabditis briggsae.